The sequence spans 476 residues: Ribulose bisphosphate carboxylase large chain (476 aa).

Asparagine 124 and threonine 174 together coordinate substrate. Residue lysine 176 is the Proton acceptor of the active site. Lysine 178 serves as a coordination point for substrate. Lysine 202, aspartate 204, and glutamate 205 together coordinate Mg(2+). N6-carboxylysine is present on lysine 202. Histidine 295 functions as the Proton acceptor in the catalytic mechanism. The substrate site is built by arginine 296, histidine 328, and serine 380.

The protein belongs to the RuBisCO large chain family. Type I subfamily. As to quaternary structure, heterohexadecamer of 8 large chains and 8 small chains; disulfide-linked. The disulfide link is formed within the large subunit homodimers. It depends on Mg(2+) as a cofactor. Post-translationally, the disulfide bond which can form in the large chain dimeric partners within the hexadecamer appears to be associated with oxidative stress and protein turnover.

The protein resides in the carboxysome. It catalyses the reaction 2 (2R)-3-phosphoglycerate + 2 H(+) = D-ribulose 1,5-bisphosphate + CO2 + H2O. The enzyme catalyses D-ribulose 1,5-bisphosphate + O2 = 2-phosphoglycolate + (2R)-3-phosphoglycerate + 2 H(+). In terms of biological role, ruBisCO catalyzes two reactions: the carboxylation of D-ribulose 1,5-bisphosphate, the primary event in carbon dioxide fixation, as well as the oxidative fragmentation of the pentose substrate in the photorespiration process. Both reactions occur simultaneously and in competition at the same active site. This chain is Ribulose bisphosphate carboxylase large chain, found in Trichormus variabilis (strain ATCC 29413 / PCC 7937) (Anabaena variabilis).